The following is a 54-amino-acid chain: Large ribosomal subunit protein bL33 (54 aa).

This sequence belongs to the bacterial ribosomal protein bL33 family.

In Thermus thermophilus (strain ATCC BAA-163 / DSM 7039 / HB27), this protein is Large ribosomal subunit protein bL33.